We begin with the raw amino-acid sequence, 460 residues long: Argininosuccinate lyase (460 aa).

It belongs to the lyase 1 family. Argininosuccinate lyase subfamily.

Its subcellular location is the cytoplasm. It catalyses the reaction 2-(N(omega)-L-arginino)succinate = fumarate + L-arginine. Its pathway is amino-acid biosynthesis; L-arginine biosynthesis; L-arginine from L-ornithine and carbamoyl phosphate: step 3/3. The sequence is that of Argininosuccinate lyase from Oleidesulfovibrio alaskensis (strain ATCC BAA-1058 / DSM 17464 / G20) (Desulfovibrio alaskensis).